The sequence spans 730 residues: Translation initiation factor IF-2 (730 aa).

Positions 48-151 (GNGNQKQGGS…NKAKPLPEKV (104 aa)) are disordered. 2 stretches are compositionally biased toward basic and acidic residues: residues 61–77 (EQQKKAGEKKPAQDHGQ) and 89–104 (NQHDRSQGSDQQKGKA). Residues 110 to 123 (KPKHKGNKNKKQHQ) are compositionally biased toward basic residues. Residues 137-148 (RQPEMNKAKPLP) are compositionally biased toward basic and acidic residues. Positions 231–400 (ERPPVVTIMG…LLVAEVEELK (170 aa)) constitute a tr-type G domain. A G1 region spans residues 240–247 (GHVDHGKT). 240 to 247 (GHVDHGKT) lines the GTP pocket. The G2 stretch occupies residues 265–269 (GITQH). Positions 286–289 (DTPG) are G3. Residues 286–290 (DTPGH) and 340–343 (NKMD) contribute to the GTP site. Residues 340 to 343 (NKMD) form a G4 region. The G5 stretch occupies residues 376–378 (SAL).

Belongs to the TRAFAC class translation factor GTPase superfamily. Classic translation factor GTPase family. IF-2 subfamily.

It localises to the cytoplasm. Its function is as follows. One of the essential components for the initiation of protein synthesis. Protects formylmethionyl-tRNA from spontaneous hydrolysis and promotes its binding to the 30S ribosomal subunits. Also involved in the hydrolysis of GTP during the formation of the 70S ribosomal complex. The protein is Translation initiation factor IF-2 of Halalkalibacterium halodurans (strain ATCC BAA-125 / DSM 18197 / FERM 7344 / JCM 9153 / C-125) (Bacillus halodurans).